The chain runs to 244 residues: uncharacterized protein (244 aa).

The next 4 membrane-spanning stretches (helical) occupy residues 20 to 42 (TITAIAPIVMTFEPFFIFPVVLI), 49 to 67 (FVYILLPITAALILRATKV), 82 to 101 (TPSIAVFAVLLVATTIASVF), and 108 to 125 (AFLVAIVVISILHAATPI).

Its subcellular location is the cell membrane. This is an uncharacterized protein from Archaeoglobus fulgidus (strain ATCC 49558 / DSM 4304 / JCM 9628 / NBRC 100126 / VC-16).